The primary structure comprises 437 residues: tRNA-2-methylthio-N(6)-dimethylallyladenosine synthase (437 aa).

In terms of domain architecture, MTTase N-terminal spans 1-115 (MKVYIETMGC…ISQVIHKEKA (115 aa)). 6 residues coordinate [4Fe-4S] cluster: C10, C46, C78, C148, C152, and C155. Positions 134–367 (KKAQIRSLLN…QNRHKEILEE (234 aa)) constitute a Radical SAM core domain. The TRAM domain occupies 370-436 (KLEVGKTHVV…KGRLMATTKG (67 aa)).

The protein belongs to the methylthiotransferase family. MiaB subfamily. As to quaternary structure, monomer. Requires [4Fe-4S] cluster as cofactor.

It is found in the cytoplasm. It catalyses the reaction N(6)-dimethylallyladenosine(37) in tRNA + (sulfur carrier)-SH + AH2 + 2 S-adenosyl-L-methionine = 2-methylsulfanyl-N(6)-dimethylallyladenosine(37) in tRNA + (sulfur carrier)-H + 5'-deoxyadenosine + L-methionine + A + S-adenosyl-L-homocysteine + 2 H(+). In terms of biological role, catalyzes the methylthiolation of N6-(dimethylallyl)adenosine (i(6)A), leading to the formation of 2-methylthio-N6-(dimethylallyl)adenosine (ms(2)i(6)A) at position 37 in tRNAs that read codons beginning with uridine. The chain is tRNA-2-methylthio-N(6)-dimethylallyladenosine synthase from Helicobacter pylori (strain J99 / ATCC 700824) (Campylobacter pylori J99).